Here is a 178-residue protein sequence, read N- to C-terminus: FANCD2 opposite strand protein (178 aa).

The protein is FANCD2 opposite strand protein (Fancd2os) of Mus musculus (Mouse).